A 200-amino-acid polypeptide reads, in one-letter code: Imidazoleglycerol-phosphate dehydratase (200 aa).

This sequence belongs to the imidazoleglycerol-phosphate dehydratase family.

The protein resides in the cytoplasm. It carries out the reaction D-erythro-1-(imidazol-4-yl)glycerol 3-phosphate = 3-(imidazol-4-yl)-2-oxopropyl phosphate + H2O. It functions in the pathway amino-acid biosynthesis; L-histidine biosynthesis; L-histidine from 5-phospho-alpha-D-ribose 1-diphosphate: step 6/9. This is Imidazoleglycerol-phosphate dehydratase from Chlorobium luteolum (strain DSM 273 / BCRC 81028 / 2530) (Pelodictyon luteolum).